The primary structure comprises 92 residues: Small ribosomal subunit protein uS17 (92 aa).

It belongs to the universal ribosomal protein uS17 family. Part of the 30S ribosomal subunit.

Its function is as follows. One of the primary rRNA binding proteins, it binds specifically to the 5'-end of 16S ribosomal RNA. The sequence is that of Small ribosomal subunit protein uS17 from Cupriavidus pinatubonensis (strain JMP 134 / LMG 1197) (Cupriavidus necator (strain JMP 134)).